The following is a 949-amino-acid chain: MGVPAFFRWLSRKYPSIIVNCVEEKAKECNGVKASVDTSKPNPNEVEFDNLYLDMNGIIHPCTHPEDKPAPKNEDEMMVAIFEYIDRIFNIVRPRRLLYMAIDGVAPRAKMNQQRSRRFRASKEGMEAAEEKQKIRQEILAKGGILPPEEVKERFDSNCITPGTEFMDNLAKCLRYYIADRLNSDPGWKNLTVILSDASAPGEGEHKIMDYIRRQRAQPNHDPNTHHCLCGADADLIMLGLATHEPHFTIIREEFKPNKPKPCALCNQMGHEVKDCQGLPREKQGKHDQFADSLPASEQEFIFIRLCVLREYLERELTMASLPFTFDFERSVDDWVFMCFFVGNDFLPHLPSLEIREGAIDRLVNIYKNVVHKTGGYLTESGFVNLQRVQMIMLAVGEVEDSIFKKRKDDDDNFKRRQKEKKKRMKRDHPSFIPGGQFSPQALGNRSSPQAISNPRQTAFEMRMHDRQNSTMSSPNTSLNSDGSPSPARGIKRKSEDSDSEPEPEDNIRLWESGWKQRYYKNKFDVDASDEKFRRKVVQSYVEGLCWVLRYYYQGCASWNWYYPFHYAPFASDFEGIADMPSDFEKGSKPFKPLEQLMGVFPAASGNFLPPTWRKLMTDPESSIIDFYPEDFAIDLNGKKYAWQGVALLPFVDERRLRAALEEVYPDLTPEENRRNSLGGDVLFVGKHHPLCDFIVEQYKSKNTEPVDMPPELCYGIQGKLTPNENAVLPDKTVESPVPMLRDLTQNSAVSISFKDPQFDEDFIFKATVLPGAKKPPPVLKPGDWEKTNNDGRPWRPQLGFNRDRKPVHLDQSAFRTLGHAMPRERGMPGMYANAVPLGAYGSPYTRPLMSGQQQIPKLLSNLRPQESWRGPTPLFQQAPQRTAGAAPLLAWNRMLPAQSQYPPGQYQGLGGPMSYPQRPEDRMDRGRQAYGPGRPYLLPPPSGRYSWN.

The segment at 261–278 adopts a CCHC-type zinc-finger fold; the sequence is KPCALCNQMGHEVKDCQG. 4 disordered regions span residues 410–452, 466–507, 775–803, and 902–949; these read DDDN…PQAI, DRQN…PEDN, KPPPVLKPGDWEKTNNDGRPWRPQLGFNR, and YPPG…YSWN. The span at 416 to 427 shows a compositional bias: basic residues; that stretch reads RRQKEKKKRMKR. 2 stretches are compositionally biased toward polar residues: residues 438-452 and 469-484; these read FSPQALGNRSSPQAI and NSTMSSPNTSLNSDGS. Basic and acidic residues-rich tracts occupy residues 783–794 and 919–928; these read GDWEKTNNDGRP and RPEDRMDRGR.

Belongs to the 5'-3' exonuclease family. XRN2/RAT1 subfamily.

The protein resides in the nucleus. Its subcellular location is the nucleolus. Functionally, possesses 5'-&gt;3' exoribonuclease activity. May promote the termination of transcription by RNA polymerase II. This is 5'-3' exoribonuclease 2 (XRN2) from Gallus gallus (Chicken).